We begin with the raw amino-acid sequence, 5099 residues long: Malformin synthetase mlfA (5099 aa).

The tract at residues 224 to 615 (QRHAADRPHS…CGRADTQVKL (392 aa)) is adenylation 1. Residues 756–829 (THLENEIQLA…EAASLAKVRD (74 aa)) enclose the Carrier 1 domain. Residue Ser-790 is modified to O-(pantetheine 4'-phosphoryl)serine. Positions 867–1297 (EDVFPCTSMQ…PVDSLTLLKP (431 aa)) are condensation 1. Residues 1325-1717 (DRWVNRQPDT…GRKDTQVKLR (393 aa)) are adenylation 2. The Carrier 2 domain maps to 1857 to 1934 (ARAPELERTL…QIATQCEGIA (78 aa)). Ser-1894 carries the post-translational modification O-(pantetheine 4'-phosphoryl)serine. The interval 1995–2040 (MQQESSSSPAPSVSSSSSSSSAPKPLLAQPEPPTNLRDSVPEPFSL) is disordered. Low complexity predominate over residues 1999–2017 (SSSSPAPSVSSSSSSSSAP). A condensation 2 region spans residues 2067–2482 (EDIYPATPLQ…ALSPGDKKVL (416 aa)). Residues 2505–2897 (LSTPHAPAVC…VGRKDGQLKL (393 aa)) form an adenylation 3 region. In terms of domain architecture, Carrier 3 spans 3032 to 3108 (RPATAQERGL…RLVLHLQNTS (77 aa)). Position 3069 is an O-(pantetheine 4'-phosphoryl)serine (Ser-3069). 2 condensation regions span residues 3125–3589 (WVHL…TYDQ) and 3610–4033 (DIYP…QQAM). Residues 4058–4446 (YANREAVCAW…VGRKDSQIKF (389 aa)) are adenylation 4. Residues 4581–4657 (PPSTGMQQGI…DLAEHISSRV (77 aa)) enclose the Carrier 4 domain. An O-(pantetheine 4'-phosphoryl)serine modification is found at Ser-4618. Positions 4696 to 5017 (DILPTTGFQR…LQTVVQHQNV (322 aa)) are condensation 5.

Belongs to the NRP synthetase family.

The protein operates within secondary metabolite biosynthesis. Functionally, nonribosomal peptide synthetase; part of the gene cluster that mediates the biosynthesis of malformins, cyclic pentapeptides with a disulfide bond between 2 consecutive cysteins, that show potential anti-tumor as well as antimalarial and antitrypanosomal properties. The nonribosomal peptide synthetase mlfA is responsible of the formation of the cyclic pentapeptide. The malformin biosynthesis clusters in malformin-producing fungi also contain enzymes involved in the formation of the disulfide bond between the two consecutive cysteins within malformins, in addition to additional tailoring enzymes such as methyltransferases or oxidoreductases. They are also composed of up to 4 major facilitator superfamily transporters, and transcription factors probably involved in the regulation of the expression of those clusters. The sequence is that of Malformin synthetase mlfA from Aspergillus sclerotiicarbonarius (strain CBS 121057 / IBT 28362).